A 272-amino-acid polypeptide reads, in one-letter code: Probable glutathione S-transferase DHAR2, chloroplastic (272 aa).

Residues 1–57 (MAVLLRTTTSATTATSGGSSSATALLATTFRRGGRRLLLLPATRGSAPRRAALLTAR) constitute a chloroplast transit peptide. 2 residues coordinate glutathione: Lys-68 and Asp-79. Positions 68 and 79 each coordinate L-ascorbate. The region spanning 70–148 (SLTVPDRLGD…AIEEKYPEPS (79 aa)) is the GST N-terminal domain. Catalysis depends on Cys-80, which acts as the Nucleophile. Lys-107, Val-120, Ser-133, His-219, and Trp-266 together coordinate glutathione. Residues 126–272 (EEQWVADSDV…IAGWRPKVMG (147 aa)) enclose the GST C-terminal domain. Position 269 (Lys-269) interacts with L-ascorbate.

Belongs to the GST superfamily. DHAR family. In terms of assembly, monomer.

The protein resides in the plastid. Its subcellular location is the chloroplast. The catalysed reaction is RX + glutathione = an S-substituted glutathione + a halide anion + H(+). It carries out the reaction L-dehydroascorbate + 2 glutathione = glutathione disulfide + L-ascorbate. Functionally, involved in ascorbate homeostasis. Maintains redox pools of ascorbate by recycling dihydroascorbate (DHA) to ascorbate. Involved in scavenging reactive oxygen species (ROS) under oxidative stresses. This is Probable glutathione S-transferase DHAR2, chloroplastic from Oryza sativa subsp. japonica (Rice).